We begin with the raw amino-acid sequence, 500 residues long: Glycerol kinase (500 aa).

Thr-13 lines the ADP pocket. ATP-binding residues include Thr-13, Thr-14, and Ser-15. Thr-13 serves as a coordination point for sn-glycerol 3-phosphate. Position 17 (Arg-17) interacts with ADP. The sn-glycerol 3-phosphate site is built by Arg-83, Glu-84, Tyr-135, and Asp-244. Arg-83, Glu-84, Tyr-135, Asp-244, and Gln-245 together coordinate glycerol. Thr-266 and Gly-309 together coordinate ADP. 4 residues coordinate ATP: Thr-266, Gly-309, Gln-313, and Gly-410. Residues Gly-410 and Asn-414 each coordinate ADP.

It belongs to the FGGY kinase family.

It catalyses the reaction glycerol + ATP = sn-glycerol 3-phosphate + ADP + H(+). The protein operates within polyol metabolism; glycerol degradation via glycerol kinase pathway; sn-glycerol 3-phosphate from glycerol: step 1/1. Inhibited by fructose 1,6-bisphosphate (FBP). In terms of biological role, key enzyme in the regulation of glycerol uptake and metabolism. Catalyzes the phosphorylation of glycerol to yield sn-glycerol 3-phosphate. This is Glycerol kinase from Burkholderia ambifaria (strain ATCC BAA-244 / DSM 16087 / CCUG 44356 / LMG 19182 / AMMD) (Burkholderia cepacia (strain AMMD)).